A 282-amino-acid chain; its full sequence is Bis(5'-nucleosyl)-tetraphosphatase, symmetrical (282 aa).

It belongs to the Ap4A hydrolase family.

The catalysed reaction is P(1),P(4)-bis(5'-adenosyl) tetraphosphate + H2O = 2 ADP + 2 H(+). Functionally, hydrolyzes diadenosine 5',5'''-P1,P4-tetraphosphate to yield ADP. This chain is Bis(5'-nucleosyl)-tetraphosphatase, symmetrical, found in Enterobacter sp. (strain 638).